Reading from the N-terminus, the 134-residue chain is Small ribosomal subunit protein uS11 (134 aa).

The protein belongs to the universal ribosomal protein uS11 family. In terms of assembly, part of the 30S ribosomal subunit. Interacts with proteins S7 and S18. Binds to IF-3.

Its function is as follows. Located on the platform of the 30S subunit, it bridges several disparate RNA helices of the 16S rRNA. Forms part of the Shine-Dalgarno cleft in the 70S ribosome. The polypeptide is Small ribosomal subunit protein uS11 (Polaromonas sp. (strain JS666 / ATCC BAA-500)).